The sequence spans 471 residues: Microtubule-associated tyrosine carboxypeptidase 1 (471 aa).

Disordered regions lie at residues 1 to 40 and 76 to 116; these read MVLD…PLYP and HMRR…LRPA. His280 serves as a coordination point for Zn(2+). Glu281 (nucleophile) is an active-site residue. Zn(2+) is bound by residues His285 and Glu316.

The protein belongs to the peptidase MATCAP family. The cofactor is Zn(2+).

It is found in the cytoplasm. It localises to the cytoskeleton. The enzyme catalyses C-terminal L-alpha-aminoacyl-L-glutamyl-L-glutamyl-L-tyrosyl-[tubulin] + H2O = C-terminal L-alpha-aminoacyl-L-glutamyl-L-glutamyl-[tubulin] + L-tyrosine. It catalyses the reaction C-terminal L-alpha-aminoacyl-L-glutamyl-L-glutamyl-L-phenylalanyl-[tubulin] + H2O = C-terminal L-alpha-aminoacyl-L-glutamyl-L-glutamyl-[tubulin] + L-phenylalanine. Tyrosine carboxypeptidase that removes the C-terminal tyrosine residue of alpha-tubulin, thereby regulating microtubule dynamics and function. Also able to remove the C-terminal phenylalanine residue of alpha-tubulin TUBA8. Recognizes adjacent tubulin dimers along the same protofilament. This is Microtubule-associated tyrosine carboxypeptidase 1 from Homo sapiens (Human).